The primary structure comprises 462 residues: NAD-capped RNA hydrolase NUDT12 (462 aa).

Lys10 carries the post-translational modification N6-succinyllysine. 3 ANK repeats span residues 11 to 40 (EMIS…SLLN), 45 to 74 (NGWT…DRSL), and 78 to 98 (ARQT…ANLL). Lys185 carries the post-translational modification N6-succinyllysine. Zn(2+)-binding residues include Cys284 and Cys287. Residue Lys292 is modified to N6-succinyllysine. Zn(2+)-binding residues include Cys302 and Cys307. Residues Tyr318, 354-356 (AGF), Glu370, Glu374, and Glu415 contribute to the substrate site. The Nudix hydrolase domain occupies 319–453 (PRVDPVVIMQ…SRAIAHQLIK (135 aa)). Residues Ala354, Glu370, Glu374, and Glu415 each contribute to the Mg(2+) site. Positions 355–376 (GFIEPGETIEDAVRREVEEESG) match the Nudix box motif. The Microbody targeting signal motif lies at 460-462 (PNL).

The protein belongs to the Nudix hydrolase family. NudC subfamily. Homodimer. Homodimerization is essential for its catalytic activity and protein stability. Interacts (via ANK repeats) with BLMH. It depends on Mg(2+) as a cofactor. Zn(2+) serves as cofactor. Expressed abundantly in the liver and kidney.

It is found in the cytoplasm. The protein resides in the peroxisome. It localises to the cytoplasmic granule. The catalysed reaction is a 5'-end NAD(+)-phospho-ribonucleoside in mRNA + H2O = a 5'-end phospho-adenosine-phospho-ribonucleoside in mRNA + beta-nicotinamide D-ribonucleotide + 2 H(+). It carries out the reaction NAD(+) + H2O = beta-nicotinamide D-ribonucleotide + AMP + 2 H(+). It catalyses the reaction NADH + H2O = reduced beta-nicotinamide D-ribonucleotide + AMP + 2 H(+). The enzyme catalyses NADPH + H2O = reduced beta-nicotinamide D-ribonucleotide + adenosine 2',5'-bisphosphate + 2 H(+). MRNA decapping enzyme that specifically removes the nicotinamide adenine dinucleotide (NAD) cap from a subset of mRNAs by hydrolyzing the diphosphate linkage to produce nicotinamide mononucleotide (NMN) and 5' monophosphate mRNA. The NAD-cap is present at the 5'-end of some RNAs; in contrast to the canonical N7 methylguanosine (m7G) cap, the NAD cap promotes mRNA decay. Preferentially acts on NAD-capped transcripts in response to nutrient stress. Also acts on free nicotinamide adenine dinucleotide molecules: hydrolyzes NAD(H) into NMN(H) and AMP, and NADPH into NMNH and 2',5'-ADP. May act to regulate the concentration of peroxisomal nicotinamide nucleotide cofactors required for oxidative metabolism in this organelle. Regulates the levels of circadian clock components PER1, PER2, PER3 and CRY2 in the liver. The chain is NAD-capped RNA hydrolase NUDT12 from Mus musculus (Mouse).